Here is a 739-residue protein sequence, read N- to C-terminus: Exocyst complex component 3-like protein (739 aa).

Positions 1–370 are mediates interaction with EXOC2, EXOC4 and EXOC5; it reads MDSAARDKTQ…DVSDLEPLLT (370 aa).

The protein belongs to the SEC6 family. Interacts with EXOC2, EXOC4 and EXOC5; may be part of the exocyst.

Its subcellular location is the cytoplasmic vesicle. The protein resides in the secretory vesicle. Its function is as follows. As part of the exocyst, may play a role in regulated exocytosis of insulin granules. The chain is Exocyst complex component 3-like protein (EXOC3L1) from Bos taurus (Bovine).